Here is a 111-residue protein sequence, read N- to C-terminus: Class I hydrophobin 10 (111 aa).

An N-terminal signal peptide occupies residues 1-17 (MLFNTFVVTALASLAAA). 4 cysteine pairs are disulfide-bonded: Cys-30-Cys-90, Cys-37-Cys-84, Cys-38-Cys-71, and Cys-91-Cys-104.

The protein belongs to the fungal hydrophobin family. As to quaternary structure, self-assembles to form functional amyloid fibrils called rodlets. Self-assembly into fibrillar rodlets occurs spontaneously at hydrophobic:hydrophilic interfaces and the rodlets further associate laterally to form amphipathic monolayers.

It is found in the secreted. It localises to the cell wall. Aerial growth, conidiation, and dispersal of filamentous fungi in the environment rely upon a capability of their secreting small amphipathic proteins called hydrophobins (HPBs) with low sequence identity. Class I can self-assemble into an outermost layer of rodlet bundles on aerial cell surfaces, conferring cellular hydrophobicity that supports fungal growth, development and dispersal; whereas Class II form highly ordered films at water-air interfaces through intermolecular interactions but contribute nothing to the rodlet structure. The polypeptide is Class I hydrophobin 10 (Pleurotus ostreatus (strain PC15) (Oyster mushroom)).